The chain runs to 241 residues: Cytochrome b6-f complex iron-sulfur subunit 2, cyanelle (241 aa).

A cyanelle-targeting transit peptide spans 1–62 (MSAFACSAVA…AAKATTFSIS (62 aa)). The helical transmembrane segment at 83–103 (LLGAIAGPTIGAGGPFVSFLV) threads the bilayer. A Rieske domain is found at 127 to 223 (VEKWLETXKP…VNVLEDGVVA (97 aa)). Residues cysteine 169, histidine 171, cysteine 187, and histidine 190 each coordinate [2Fe-2S] cluster. An intrachain disulfide couples cysteine 174 to cysteine 189.

This sequence belongs to the Rieske iron-sulfur protein family. In terms of assembly, the 4 large subunits of the cytochrome b6-f complex are cytochrome b6, subunit IV (17 kDa polypeptide, petD), cytochrome f and the Rieske protein, while the 4 small subunits are petG, petL, petM and petN. The complex functions as a dimer. [2Fe-2S] cluster serves as cofactor.

The protein resides in the plastid. It localises to the cyanelle thylakoid membrane. The enzyme catalyses 2 oxidized [plastocyanin] + a plastoquinol + 2 H(+)(in) = 2 reduced [plastocyanin] + a plastoquinone + 4 H(+)(out). Component of the cytochrome b6-f complex, which mediates electron transfer between photosystem II (PSII) and photosystem I (PSI), cyclic electron flow around PSI, and state transitions. This Cyanophora paradoxa protein is Cytochrome b6-f complex iron-sulfur subunit 2, cyanelle (petC-2).